Here is a 225-residue protein sequence, read N- to C-terminus: UPF0758 protein BCE33L4198 (225 aa).

The region spanning 103–225 is the MPN domain; it reads SIRNPEDCAR…FVSLKEKGHI (123 aa). The Zn(2+) site is built by His-174, His-176, and Asp-187. The JAMM motif signature appears at 174 to 187; sequence HNHPSGDPAPSRED.

The protein belongs to the UPF0758 family.

The chain is UPF0758 protein BCE33L4198 from Bacillus cereus (strain ZK / E33L).